A 276-amino-acid polypeptide reads, in one-letter code: Diaminopimelate epimerase (276 aa).

3 residues coordinate substrate: N13, Q46, and N66. C75 functions as the Proton donor in the catalytic mechanism. Substrate contacts are provided by residues G76–N77, N159, N192, and E210–R211. The active-site Proton acceptor is the C219. G220–S221 lines the substrate pocket.

The protein belongs to the diaminopimelate epimerase family. In terms of assembly, homodimer.

It localises to the cytoplasm. The enzyme catalyses (2S,6S)-2,6-diaminopimelate = meso-2,6-diaminopimelate. Its pathway is amino-acid biosynthesis; L-lysine biosynthesis via DAP pathway; DL-2,6-diaminopimelate from LL-2,6-diaminopimelate: step 1/1. In terms of biological role, catalyzes the stereoinversion of LL-2,6-diaminopimelate (L,L-DAP) to meso-diaminopimelate (meso-DAP), a precursor of L-lysine and an essential component of the bacterial peptidoglycan. The protein is Diaminopimelate epimerase of Vibrio campbellii (strain ATCC BAA-1116).